Reading from the N-terminus, the 312-residue chain is Ornithine carbamoyltransferase (312 aa).

Carbamoyl phosphate is bound by residues 50 to 53 (STRT), Q77, R101, and 128 to 131 (HPCQ). Residues N159, D223, and 227–228 (SM) each bind L-ornithine. Residues 263–264 (CL) and R291 each bind carbamoyl phosphate.

Belongs to the aspartate/ornithine carbamoyltransferase superfamily. OTCase family.

The protein localises to the cytoplasm. The enzyme catalyses carbamoyl phosphate + L-ornithine = L-citrulline + phosphate + H(+). It functions in the pathway amino-acid biosynthesis; L-arginine biosynthesis; L-arginine from L-ornithine and carbamoyl phosphate: step 1/3. Reversibly catalyzes the transfer of the carbamoyl group from carbamoyl phosphate (CP) to the N(epsilon) atom of ornithine (ORN) to produce L-citrulline. The sequence is that of Ornithine carbamoyltransferase from Acidothermus cellulolyticus (strain ATCC 43068 / DSM 8971 / 11B).